The following is a 235-amino-acid chain: Myelin protein zero-like protein 3 (235 aa).

Positions 1 to 31 (MQQRGAAGSRGCALFPLLGVLFFQGVYIVFS) are cleaved as a signal peptide. An Ig-like V-type domain is found at 32–148 (LEIRADAHVR…NIPMTELTVT (117 aa)). Residues 32-158 (LEIRADAHVR…ERGFGTMLSS (127 aa)) are Extracellular-facing. A disulfide bridge links Cys-52 with Cys-128. An N-linked (GlcNAc...) asparagine glycan is attached at Asn-123. Residues 159-179 (VALLSILVFVPSAVVVALLLV) form a helical membrane-spanning segment. Residues 180–235 (RMGRKAAGLKKRSRSGYKKSSIEVSDDTDQEEEEACMARLCVRCAECLDSDYEETY) lie on the Cytoplasmic side of the membrane.

This sequence belongs to the myelin P0 protein family.

The protein resides in the membrane. Its function is as follows. Mediates homophilic cell-cell adhesion. This is Myelin protein zero-like protein 3 (MPZL3) from Homo sapiens (Human).